The primary structure comprises 89 residues: Small ribosomal subunit protein bS20 (89 aa).

Disordered regions lie at residues Met1–Lys25 and Lys69–Ser89. Residues Ala7–His20 show a composition bias toward basic residues.

It belongs to the bacterial ribosomal protein bS20 family.

In terms of biological role, binds directly to 16S ribosomal RNA. In Geobacillus thermodenitrificans (strain NG80-2), this protein is Small ribosomal subunit protein bS20.